Consider the following 398-residue polypeptide: MNIHEYQAKRLLHEYGAPIANGVAVYSIEQAEKWAKKLPGPLYVVKSQIHAGGRGKGQFKELGPDAKGGVRLAQSVEEVVANVQEMLGKTLVTKQTGPEGKQVNRLYIEDGADIERELYLSLLVDRSVGRIAFVVSTEGGMDIETVAEETPEKIFTLPIDVTEGVTSADCARLCDALELHDSAREDGEKLFPILYKAFCEKDMSLLEINPLIVMKDGHLRVLDAKVSFDNNALFRHPDILELRDLSEEDPKEIEASKHDLAYVALEGTIGCMVNGAGLAMATMDIIKLYGAEPANFLDVGGGASKEKVTAAFKIITADPNVKGILVNIFGGIMRCDVIAEGVVAAVREVGLKVPLVVRLEGTNVEQGKAIINDSGLNVIPADDLDDAAQKIVAAVKGA.

The ATP-grasp domain maps to 9 to 254 (KRLLHEYGAP…LSEEDPKEIE (246 aa)). Residues K46, 53–55 (GRG), E109, A112, and E117 each bind ATP. The Mg(2+) site is built by N209 and D223. Residues N274 and 331-333 (GIM) each bind substrate.

The protein belongs to the succinate/malate CoA ligase beta subunit family. Heterotetramer of two alpha and two beta subunits. The cofactor is Mg(2+).

It carries out the reaction succinate + ATP + CoA = succinyl-CoA + ADP + phosphate. The enzyme catalyses GTP + succinate + CoA = succinyl-CoA + GDP + phosphate. It functions in the pathway carbohydrate metabolism; tricarboxylic acid cycle; succinate from succinyl-CoA (ligase route): step 1/1. In terms of biological role, succinyl-CoA synthetase functions in the citric acid cycle (TCA), coupling the hydrolysis of succinyl-CoA to the synthesis of either ATP or GTP and thus represents the only step of substrate-level phosphorylation in the TCA. The beta subunit provides nucleotide specificity of the enzyme and binds the substrate succinate, while the binding sites for coenzyme A and phosphate are found in the alpha subunit. This Bartonella tribocorum (strain CIP 105476 / IBS 506) protein is Succinate--CoA ligase [ADP-forming] subunit beta.